We begin with the raw amino-acid sequence, 215 residues long: 3-demethoxyubiquinol 3-hydroxylase (215 aa).

Fe cation contacts are provided by Glu64, Glu94, His97, Glu146, Glu178, and His181.

The protein belongs to the COQ7 family. Fe cation serves as cofactor.

It localises to the cell membrane. It carries out the reaction a 5-methoxy-2-methyl-3-(all-trans-polyprenyl)benzene-1,4-diol + AH2 + O2 = a 3-demethylubiquinol + A + H2O. The protein operates within cofactor biosynthesis; ubiquinone biosynthesis. Functionally, catalyzes the hydroxylation of 2-nonaprenyl-3-methyl-6-methoxy-1,4-benzoquinol during ubiquinone biosynthesis. The chain is 3-demethoxyubiquinol 3-hydroxylase from Coxiella burnetii (strain CbuG_Q212) (Coxiella burnetii (strain Q212)).